The sequence spans 313 residues: Probable alpha-L-glutamate ligase (313 aa).

The ATP-grasp domain maps to 112-294; that stretch reads LQMLMAQGIA…IALQMIVHLE (183 aa). Residues K148, 185-186, D194, and 218-220 each bind ATP; these read EF and RAN. Residues D255, E267, and N269 each contribute to the Mg(2+) site. Mn(2+)-binding residues include D255, E267, and N269.

Belongs to the RimK family. The cofactor is Mg(2+). Mn(2+) is required as a cofactor.

This Pasteurella multocida (strain Pm70) protein is Probable alpha-L-glutamate ligase.